Reading from the N-terminus, the 123-residue chain is WAP four-disulfide core domain protein 5 (123 aa).

A signal peptide spans 1 to 24 (MRFGRLLLLAVLLAGVSQLPAVSG). 2 consecutive WAP domains span residues 27-74 (KGEK…IPRV) and 75-121 (SVKL…RDPV). Disulfide bonds link Cys-34-Cys-62, Cys-41-Cys-66, Cys-49-Cys-61, Cys-55-Cys-70, Cys-81-Cys-109, Cys-88-Cys-113, Cys-96-Cys-108, and Cys-102-Cys-117.

It localises to the secreted. Its function is as follows. Putative acid-stable proteinase inhibitor. The polypeptide is WAP four-disulfide core domain protein 5 (WFDC5) (Otolemur garnettii (Small-eared galago)).